The primary structure comprises 114 residues: MYYKFSGFTQKLAGAWASDAYSPQGLRPVVSTEAPPIIFATPTKLSSGPTAYDYAGKNTVPELQKFFQKSDGVPIHLKRGLPDQMLYRTTMALTVGGTIYCLIALYMASQPRNK.

Residues 1-55 constitute a mitochondrion transit peptide; sequence MYYKFSGFTQKLAGAWASDAYSPQGLRPVVSTEAPPIIFATPTKLSSGPTAYDYA. N6-acetyllysine is present on K69. Residues 82–107 traverse the membrane as a helical segment; sequence PDQMLYRTTMALTVGGTIYCLIALYM.

The protein belongs to the cytochrome c oxidase VIIa family. As to quaternary structure, interacts with the mitochondrial respiratory complexes III (CIII) and IV (CIV), promoting their association.

The protein localises to the mitochondrion inner membrane. Assembly factor that mediates the formation of some mitochondrial respiratory supercomplexes (respirasomes), thereby promoting oxidative phosphorylation and energy metabolism. Acts as a molecular adapter that associates with both mitochondrial respiratory complexes III (CIII) and IV (CIV), promoting their association. Mediates the formation of various mitochondrial respiratory supercomplexes, such as MCIII(2)IV(2), composed of two CIII and two CIV, and the CS-respirasome (MCI(1)III(2)IV(2)), composed of one CI, two CIII and two CIV. Not involved in the formation of the canonical respirasome (MCI(1)III(2)IV(1)), composed of one CI, two CIII and one CIV. The formation of different respirasomes is important for cell adaptation to oxygen conditions and prevent metabolic exhaustion: supercomplexes mediated by COX7A2L/SCAF1 are required to maintain oxidative phosphorylation upon low oxygen conditions and promote metabolic rewiring toward glycolysis. The polypeptide is Cytochrome c oxidase subunit 7A2-like, mitochondrial (Bos taurus (Bovine)).